A 137-amino-acid chain; its full sequence is Fatty acid-binding protein homolog 8 (137 aa).

The Nuclear localization signal signature appears at 24–34; that stretch reads KEIGVGLLIRK.

Belongs to the calycin superfamily. Fatty-acid binding protein (FABP) family. In terms of assembly, monomer. As to expression, intestine.

Its subcellular location is the lysosome. It is found in the nucleus. In terms of biological role, lysosomal lipid chaperone which binds to a wide range of unsaturated fatty acids, including high affinity binding to oleic acid and oleoylethanolamide, to transport them into the nucleus. As part of a lysosome-to-nucleus retrograde lipid signaling pathway, translocates into the nucleus where it activates the transcription of genes promoting longevity and activation of mitochondrial beta oxidation. The chain is Fatty acid-binding protein homolog 8 from Caenorhabditis elegans.